We begin with the raw amino-acid sequence, 230 residues long: 7-cyano-7-deazaguanine synthase (230 aa).

ATP is bound at residue 9 to 19 (YSGGLDSTTCL). Zn(2+) is bound by residues cysteine 190, cysteine 200, cysteine 203, and cysteine 206.

The protein belongs to the QueC family. The cofactor is Zn(2+).

The enzyme catalyses 7-carboxy-7-deazaguanine + NH4(+) + ATP = 7-cyano-7-deazaguanine + ADP + phosphate + H2O + H(+). Its pathway is purine metabolism; 7-cyano-7-deazaguanine biosynthesis. Its function is as follows. Catalyzes the ATP-dependent conversion of 7-carboxy-7-deazaguanine (CDG) to 7-cyano-7-deazaguanine (preQ(0)). The protein is 7-cyano-7-deazaguanine synthase of Syntrophotalea carbinolica (strain DSM 2380 / NBRC 103641 / GraBd1) (Pelobacter carbinolicus).